The primary structure comprises 413 residues: MQAEIICTGSELLLGYVQNTNADYLGHELAALGIEVVLQITVGDDWKIMEQAVREALERVDLVITTGGLGPTTDDITKDVIAAVLGVPMVTDDESLAQMREYFARRGIEMPDIFIRQASFPYGSRIIPNHKGTAPGALIERDGKVIVIFPGPPRELRAMFETWVKPYLLEIPGRGEVLRTRVLKLTGIAEYAVQEILKELGDLVNPSLGYLAMPGEVHLRVNAHAVDPAEAERMVEELTEKVTGLVGEYVFAIDDEVPEKTVGDLLLRKGLTVSVAESCTAGMVAARFTDVPGSSRYFIGGVVAYDNDLKREVLGVPAEILDRYGAVSEQTAVAMAEGIRRLTGSDLGLAITGIAGPDGGTRAKPVGLVYVALASARETLCQRLLLPGVRKAVRIGTVNSSLRIVKSFLNRQA.

The protein belongs to the CinA family.

In Desulforudis audaxviator (strain MP104C), this protein is Putative competence-damage inducible protein.